A 463-amino-acid chain; its full sequence is Movement protein TGB1 (463 aa).

The disordered stretch occupies residues 1–126 (MESGFNGSRP…RIPEEGGGGL (126 aa)). Nucleolar localization signal stretches follow at residues 11 to 16 (HRVKKD) and 37 to 52 (FRKN…KPRS). Residues 23 to 49 (PVNTQGSSGTTGNAFRKNNNNKTQNWK) show a composition bias toward polar residues. The span at 58–67 (NEGDQTKNNK) shows a compositional bias: basic and acidic residues. The segment covering 83 to 95 (RPESSTGESVKQQ) has biased composition (polar residues). Positions 96–107 (SEPHRVLEDKKQ) are enriched in basic and acidic residues. The 142-residue stretch at 185-326 (CNLSQRESEV…WLQVPVIFQS (142 aa)) folds into the (+)RNA virus helicase ATP-binding domain. Residue 215 to 222 (GVPGSGKT) coordinates ATP. A (+)RNA virus helicase C-terminal domain is found at 327–463 (LTSRRFGKAT…QPQTDRYGPE (137 aa)).

The protein belongs to the virgaviridae/benyvirus TGB1 movement protein family. As to quaternary structure, homooligomer. TGB1-TGB3-TGB2 complex formation is enhanced by ATP hydrolysis. Interacts with the suppressor of RNA silencing (via N-terminus). Interacts (via N-terminus) with host importin IMPA1. Mg(2+) is required as a cofactor.

Its subcellular location is the host cell junction. The protein localises to the host plasmodesma. The protein resides in the host nucleus. It localises to the host cytoplasm. It is found in the host nucleolus. Its subcellular location is the host cytoskeleton. It catalyses the reaction ATP + H2O = ADP + phosphate + H(+). Functionally, participates in the transport of viral genome to neighboring plant cells directly through plasmodesmata, without any budding. Multifunctional movement protein with RNA-binding, ATPase and helicase activities. Engages in homologous interactions leading to the formation of a ribonucleoprotein complex containing plus-sense viral RNAs (vRNPs). ATPase activity is probably required for vRNPs movement complex assembly. Intracellular delivery of TGBp1-containing vRNPs to plasmodesmata is facilitated by TGBp2 and TGBp3. This chain is Movement protein TGB1, found in Potato mop-top virus (isolate Potato/Sweden/Sw) (PMTV).